Consider the following 78-residue polypeptide: Small ribosomal subunit protein uS17 (78 aa).

Belongs to the universal ribosomal protein uS17 family. In terms of assembly, part of the 30S ribosomal subunit.

Functionally, one of the primary rRNA binding proteins, it binds specifically to the 5'-end of 16S ribosomal RNA. The sequence is that of Small ribosomal subunit protein uS17 from Parvibaculum lavamentivorans (strain DS-1 / DSM 13023 / NCIMB 13966).